We begin with the raw amino-acid sequence, 355 residues long: Tetraspanin-10 (355 aa).

Residues 1–33 (MEEGERSPLLSQETAGQKPLSVHRPPTSGCLGP) are disordered. Topologically, residues 1 to 78 (MEEGERSPLL…LSPGSSCVKY (78 aa)) are cytoplasmic. A helical membrane pass occupies residues 79-99 (LIFLSNFPFSLLGLLALAIGL). Over 100–120 (WGLAVKGSLGSDLGGPLPTDP) the chain is Extracellular. A helical membrane pass occupies residues 121–141 (MLGLALGGLVVSAASLAGCLG). Topologically, residues 142-154 (ALCENTCLLRGFS) are cytoplasmic. Residues 155 to 175 (GGILAFLVLEAVAGALVVALW) form a helical membrane-spanning segment. The Extracellular portion of the chain corresponds to 176–355 (GPLQDSLEHT…APPAAKPARG (180 aa)). Disulfide bonds link Cys-212/Cys-279, Cys-213/Cys-243, Cys-229/Cys-237, and Cys-244/Cys-258. Residue Asn-228 is glycosylated (N-linked (GlcNAc...) asparagine). Residues 327–355 (YGPGAHGEDRAGPQSPSPGAPPAAKPARG) are disordered. Residues 341–355 (SPSPGAPPAAKPARG) are compositionally biased toward pro residues.

It belongs to the tetraspanin (TM4SF) family. Interacts with ADAM10. As to expression, expressed in the eye, including iris, ciliary body, retinal pigment epithelium, but not lens (protein level).

It localises to the cell membrane. In terms of biological role, part of TspanC8 subgroup, composed of 6 members that interact with the transmembrane metalloprotease ADAM10. This interaction is required for ADAM10 exit from the endoplasmic reticulum and for enzymatic maturation and trafficking to the cell surface as well as substrate specificity. Different TspanC8/ADAM10 complexes have distinct substrates. This chain is Tetraspanin-10, found in Homo sapiens (Human).